A 938-amino-acid chain; its full sequence is Scm-like with four MBT domains protein 2 (938 aa).

The interval 1–32 (MERYLPVSKKRNSSSSLEKITGSANGNGTLYS) is disordered. Positions 13 to 30 (SSSSLEKITGSANGNGTL) are enriched in polar residues. 4 MBT repeats span residues 43-143 (FSWG…LRPP), 151-255 (SDWT…MDPP), 265-371 (FEWK…LAPP), and 379-475 (FNWV…LTTP). A disordered region spans residues 742 to 836 (PEGIPESLPE…TVPTTASSNN (95 aa)). Composition is skewed to basic and acidic residues over residues 765 to 777 (TEQEKRETLDTAR) and 809 to 822 (RNSEALKRPPVERA). Residues 868–931 (WSVTDVVRFI…CHQIERVKVA (64 aa)) enclose the SAM domain.

In terms of assembly, interacts with YY1. Interacts with methylated histones H3K9me2 and H4K20me2. Expressed in testis and, at much lower levels, in ovary.

It localises to the nucleus. Transcriptional repressor of HOXB13 gene. This chain is Scm-like with four MBT domains protein 2 (Sfmbt2), found in Mus musculus (Mouse).